A 208-amino-acid chain; its full sequence is Outer-membrane lipoprotein carrier protein (208 aa).

The signal sequence occupies residues 1–22; that stretch reads MKKRLCAVLLASPLLFSAAVFA.

Belongs to the LolA family. As to quaternary structure, monomer.

The protein resides in the periplasm. Participates in the translocation of lipoproteins from the inner membrane to the outer membrane. Only forms a complex with a lipoprotein if the residue after the N-terminal Cys is not an aspartate (The Asp acts as a targeting signal to indicate that the lipoprotein should stay in the inner membrane). The protein is Outer-membrane lipoprotein carrier protein of Shewanella baltica (strain OS195).